A 291-amino-acid chain; its full sequence is HTH-type transcriptional activator AmpR (291 aa).

The region spanning 6–63 is the HTH lysR-type domain; the sequence is LPLNSLRAFEAAARHLSFTHAAIELNVTHSAISQHVKTLEQHLNCQLFVRVSRGLMLT. Residues 23–42 constitute a DNA-binding region (H-T-H motif); sequence FTHAAIELNVTHSAISQHVK.

This sequence belongs to the LysR transcriptional regulatory family.

The protein localises to the cytoplasm. Its function is as follows. This protein is a positive regulator of gene expression of cephalosporinase (AmpC). The protein is HTH-type transcriptional activator AmpR (ampR) of Enterobacter cloacae.